The chain runs to 147 residues: Anti-sigma F factor (147 aa).

It belongs to the anti-sigma-factor family.

It catalyses the reaction L-seryl-[protein] + ATP = O-phospho-L-seryl-[protein] + ADP + H(+). The enzyme catalyses L-threonyl-[protein] + ATP = O-phospho-L-threonyl-[protein] + ADP + H(+). Functionally, binds to sigma F and blocks its ability to form an RNA polymerase holoenzyme (E-sigma F). Phosphorylates SpoIIAA on a serine residue. This phosphorylation may enable SpoIIAA to act as an anti-anti-sigma factor that counteracts SpoIIAB and thus releases sigma F from inhibition. The protein is Anti-sigma F factor of Heyndrickxia coagulans (Weizmannia coagulans).